The chain runs to 75 residues: CDC42 small effector protein 2-B (75 aa).

S-palmitoyl cysteine attachment occurs at residues C10 and C11. In terms of domain architecture, CRIB spans 29–42 (IGEPMNFVHTAHVG).

The protein belongs to the CDC42SE/SPEC family.

Its subcellular location is the cytoplasm. It localises to the cytoskeleton. The protein resides in the cell membrane. Probably involved in the organization of the actin cytoskeleton by acting downstream of CDC42, inducing actin filament assembly. The sequence is that of CDC42 small effector protein 2-B (cdc42se2-b) from Xenopus laevis (African clawed frog).